The primary structure comprises 300 residues: Actin-related protein 2/3 complex subunit 2-A (300 aa).

This sequence belongs to the ARPC2 family. Component of the Arp2/3 complex composed of actr2/arp2, actr3/arp3, arpc1 (arpc1a or arpc1b), arpc2, arpc3, arpc4 and arpc5.

It localises to the cytoplasm. Its subcellular location is the cytoskeleton. The protein localises to the cell projection. It is found in the nucleus. Functionally, actin-binding component of the Arp2/3 complex, a multiprotein complex that mediates actin polymerization upon stimulation by nucleation-promoting factor (NPF). The Arp2/3 complex mediates the formation of branched actin networks in the cytoplasm, providing the force for cell motility. In addition to its role in the cytoplasmic cytoskeleton, the Arp2/3 complex also promotes actin polymerization in the nucleus, thereby regulating gene transcription and repair of damaged DNA. The Arp2/3 complex promotes homologous recombination (HR) repair in response to DNA damage by promoting nuclear actin polymerization, leading to drive motility of double-strand breaks (DSBs). This chain is Actin-related protein 2/3 complex subunit 2-A (arpc2-a), found in Xenopus laevis (African clawed frog).